We begin with the raw amino-acid sequence, 338 residues long: Anthranilate phosphoribosyltransferase (338 aa).

5-phospho-alpha-D-ribose 1-diphosphate-binding positions include glycine 82, 85 to 86 (GD), threonine 90, 92 to 95 (NIST), 110 to 118 (KHGNRAASS), and serine 122. Glycine 82 provides a ligand contact to anthranilate. Serine 94 provides a ligand contact to Mg(2+). Asparagine 113 serves as a coordination point for anthranilate. Arginine 168 provides a ligand contact to anthranilate. Mg(2+)-binding residues include aspartate 226 and glutamate 227.

The protein belongs to the anthranilate phosphoribosyltransferase family. As to quaternary structure, homodimer. Mg(2+) serves as cofactor.

The enzyme catalyses N-(5-phospho-beta-D-ribosyl)anthranilate + diphosphate = 5-phospho-alpha-D-ribose 1-diphosphate + anthranilate. It functions in the pathway amino-acid biosynthesis; L-tryptophan biosynthesis; L-tryptophan from chorismate: step 2/5. In terms of biological role, catalyzes the transfer of the phosphoribosyl group of 5-phosphorylribose-1-pyrophosphate (PRPP) to anthranilate to yield N-(5'-phosphoribosyl)-anthranilate (PRA). The protein is Anthranilate phosphoribosyltransferase of Deinococcus radiodurans (strain ATCC 13939 / DSM 20539 / JCM 16871 / CCUG 27074 / LMG 4051 / NBRC 15346 / NCIMB 9279 / VKM B-1422 / R1).